The chain runs to 690 residues: Elongation factor G (690 aa).

The tr-type G domain maps to 8–283 (EDYRNFGIMA…AVVDYLPSPV (276 aa)). GTP is bound by residues 17-24 (AHIDAGKT), 81-85 (DTPGH), and 135-138 (NKMD).

The protein belongs to the TRAFAC class translation factor GTPase superfamily. Classic translation factor GTPase family. EF-G/EF-2 subfamily.

Its subcellular location is the cytoplasm. Functionally, catalyzes the GTP-dependent ribosomal translocation step during translation elongation. During this step, the ribosome changes from the pre-translocational (PRE) to the post-translocational (POST) state as the newly formed A-site-bound peptidyl-tRNA and P-site-bound deacylated tRNA move to the P and E sites, respectively. Catalyzes the coordinated movement of the two tRNA molecules, the mRNA and conformational changes in the ribosome. This chain is Elongation factor G, found in Rhodopseudomonas palustris (strain HaA2).